A 31-amino-acid polypeptide reads, in one-letter code: Cliotide T13 (31 aa).

The segment at residues 1–31 is a cross-link (cyclopeptide (Asp-Asn)); the sequence is DTTPCGESCVWIPCVSSIVGCSCQNKVCYQN. Disulfide bonds link Cys5–Cys21, Cys9–Cys23, and Cys14–Cys28.

In terms of processing, contains 3 disulfide bonds. This is a cyclic peptide. As to expression, expressed in seed but not in root nodules.

Probably participates in a plant defense mechanism. Not active against Gram-negative bacterium E.coli ATCC 700926 or Gram-positive bacterium S.aureus ATCC 12600 up to a concentration of 100 uM under low-salt conditions. The polypeptide is Cliotide T13 (Clitoria ternatea (Butterfly pea)).